Reading from the N-terminus, the 467-residue chain is Asparagine--tRNA ligase (467 aa).

This sequence belongs to the class-II aminoacyl-tRNA synthetase family. As to quaternary structure, homodimer.

The protein resides in the cytoplasm. The enzyme catalyses tRNA(Asn) + L-asparagine + ATP = L-asparaginyl-tRNA(Asn) + AMP + diphosphate + H(+). This Pasteurella multocida (strain Pm70) protein is Asparagine--tRNA ligase.